Reading from the N-terminus, the 40-residue chain is Light-harvesting protein B800/830/1020 beta-1 chain (40 aa).

Residues 1 to 20 lie on the Cytoplasmic side of the membrane; the sequence is ANDIRPLRDFEDEEAQEFHQ. A bacteriochlorophyll is bound by residues His19 and His37. The helical transmembrane segment at 21–40 threads the bilayer; sequence AAVQAFFLYVAVAFVAHLPV.

This sequence belongs to the antenna complex beta subunit family. As to quaternary structure, the core complex is formed by different alpha and beta chains, binding bacteriochlorophyll molecules, and arranged most probably in tetrameric structures disposed around the reaction center. The non-pigmented gamma chains may constitute additional components.

It is found in the cell inner membrane. Functionally, antenna complexes are light-harvesting systems, which transfer the excitation energy to the reaction centers. This Halorhodospira halochloris (Ectothiorhodospira halochloris) protein is Light-harvesting protein B800/830/1020 beta-1 chain.